The following is a 97-amino-acid chain: Small ribosomal subunit protein bS20 (97 aa).

This sequence belongs to the bacterial ribosomal protein bS20 family.

In terms of biological role, binds directly to 16S ribosomal RNA. The protein is Small ribosomal subunit protein bS20 of Prochlorococcus marinus (strain MIT 9312).